A 274-amino-acid polypeptide reads, in one-letter code: Diaminopimelate epimerase (274 aa).

3 residues coordinate substrate: N11, Q44, and N64. C73 (proton donor) is an active-site residue. Residues 74–75 (GN), N157, N190, and 208–209 (ER) contribute to the substrate site. C217 (proton acceptor) is an active-site residue. 218–219 (GS) contributes to the substrate binding site.

Belongs to the diaminopimelate epimerase family. Homodimer.

Its subcellular location is the cytoplasm. It carries out the reaction (2S,6S)-2,6-diaminopimelate = meso-2,6-diaminopimelate. It functions in the pathway amino-acid biosynthesis; L-lysine biosynthesis via DAP pathway; DL-2,6-diaminopimelate from LL-2,6-diaminopimelate: step 1/1. Catalyzes the stereoinversion of LL-2,6-diaminopimelate (L,L-DAP) to meso-diaminopimelate (meso-DAP), a precursor of L-lysine and an essential component of the bacterial peptidoglycan. The polypeptide is Diaminopimelate epimerase (Enterobacter sp. (strain 638)).